The sequence spans 901 residues: Alanine--tRNA ligase (901 aa).

Positions 581, 585, 684, and 688 each coordinate Zn(2+).

The protein belongs to the class-II aminoacyl-tRNA synthetase family. Zn(2+) serves as cofactor.

The protein resides in the cytoplasm. It catalyses the reaction tRNA(Ala) + L-alanine + ATP = L-alanyl-tRNA(Ala) + AMP + diphosphate. Its function is as follows. Catalyzes the attachment of alanine to tRNA(Ala) in a two-step reaction: alanine is first activated by ATP to form Ala-AMP and then transferred to the acceptor end of tRNA(Ala). Also edits incorrectly charged Ser-tRNA(Ala) and Gly-tRNA(Ala) via its editing domain. The polypeptide is Alanine--tRNA ligase (Mycobacterium ulcerans (strain Agy99)).